Here is a 469-residue protein sequence, read N- to C-terminus: tRNA modification GTPase MnmE (469 aa).

(6S)-5-formyl-5,6,7,8-tetrahydrofolate is bound by residues Arg-38, Glu-95, and Arg-134. A TrmE-type G domain is found at 230–392; that stretch reads GIRVALVGPP…LRRGLAALVD (163 aa). Residues 240-245, 259-265, and 284-287 each bind GTP; these read NAGKSS, SAQAGTT, and DTAG. Positions 244 and 265 each coordinate Mg(2+). Lys-468 contacts (6S)-5-formyl-5,6,7,8-tetrahydrofolate.

Belongs to the TRAFAC class TrmE-Era-EngA-EngB-Septin-like GTPase superfamily. TrmE GTPase family. Homodimer. Heterotetramer of two MnmE and two MnmG subunits. The cofactor is K(+).

It localises to the cytoplasm. Its function is as follows. Exhibits a very high intrinsic GTPase hydrolysis rate. Involved in the addition of a carboxymethylaminomethyl (cmnm) group at the wobble position (U34) of certain tRNAs, forming tRNA-cmnm(5)s(2)U34. The chain is tRNA modification GTPase MnmE from Halorhodospira halophila (strain DSM 244 / SL1) (Ectothiorhodospira halophila (strain DSM 244 / SL1)).